A 331-amino-acid polypeptide reads, in one-letter code: Adenosine deaminase (331 aa).

The Zn(2+) site is built by His12 and His14. Substrate-binding residues include His14, Asp16, and Gly170. His197 provides a ligand contact to Zn(2+). The active-site Proton donor is the Glu200. Zn(2+) is bound at residue Asp278.

The protein belongs to the metallo-dependent hydrolases superfamily. Adenosine and AMP deaminases family. Adenosine deaminase subfamily. Zn(2+) serves as cofactor.

The catalysed reaction is adenosine + H2O + H(+) = inosine + NH4(+). It carries out the reaction 2'-deoxyadenosine + H2O + H(+) = 2'-deoxyinosine + NH4(+). Functionally, catalyzes the hydrolytic deamination of adenosine and 2-deoxyadenosine. This is Adenosine deaminase from Clostridium botulinum (strain 657 / Type Ba4).